The following is a 418-amino-acid chain: Gamma-glutamyl phosphate reductase (418 aa).

This sequence belongs to the gamma-glutamyl phosphate reductase family.

It localises to the cytoplasm. It catalyses the reaction L-glutamate 5-semialdehyde + phosphate + NADP(+) = L-glutamyl 5-phosphate + NADPH + H(+). It participates in amino-acid biosynthesis; L-proline biosynthesis; L-glutamate 5-semialdehyde from L-glutamate: step 2/2. In terms of biological role, catalyzes the NADPH-dependent reduction of L-glutamate 5-phosphate into L-glutamate 5-semialdehyde and phosphate. The product spontaneously undergoes cyclization to form 1-pyrroline-5-carboxylate. This chain is Gamma-glutamyl phosphate reductase, found in Desulforapulum autotrophicum (strain ATCC 43914 / DSM 3382 / VKM B-1955 / HRM2) (Desulfobacterium autotrophicum).